A 474-amino-acid polypeptide reads, in one-letter code: Crocetin glucosyltransferase, chloroplastic (474 aa).

The N-terminal 45 residues, 1-45 (MVQQRHVLLITYPAQGHINPALQFAQRLLRMGIQVTLATSVYALS), are a transit peptide targeting the chloroplast. His17 functions as the Proton acceptor in the catalytic mechanism. Residue His17 participates in an anthocyanidin binding. The UDP-alpha-D-glucose site is built by Gln346, His361, Trp364, Asn365, Ser366, Glu369, Asp385, and Gln386.

This sequence belongs to the UDP-glycosyltransferase family. As to expression, ubiquitous.

Its subcellular location is the plastid. The protein localises to the chloroplast. The enzyme catalyses crocetin + UDP-alpha-D-glucose = beta-D-glucosyl crocetin + UDP. It catalyses the reaction beta-D-glucosyl crocetin + UDP-alpha-D-glucose = bis(beta-D-glucosyl) crocetin + UDP. The catalysed reaction is beta-D-gentiobiosyl crocetin + UDP-alpha-D-glucose = beta-D-gentiobiosyl beta-D-glucosyl crocetin + UDP. In terms of biological role, glucosyltransferase acting on a broad range of substrates, including crocetin, 4-coumaric acid, caffeic acid and ferulic acid. No activity with indol-3-acetic acid, bixin and norbixin, and no formation of O-glucosides. Involved with UGT94E5 in sequential glycosylation of crocetin to crocin (bis(beta-D-gentiobiosyl) crocetin). This chain is Crocetin glucosyltransferase, chloroplastic (UGT75L6), found in Gardenia jasminoides (Cape jasmine).